Consider the following 204-residue polypeptide: MSETLHLSAETRDRAGKGASRALRREGRTPAVIYGGNEEPVAIHLEEKALVKALGTGHFFNSVVELTVGGQTVRTLPKDVAFHPVTDRPEHADFLRVSKDSVVHVNVPVIFANEEKSPGLKKGGVLNIVRHELELVCAPDAIPDDIVIDVAGYEVGDSIHISAVKLPAGVKSAITDRDFTIATIVAPSSLKSEEGDTTKTDAEG.

Residues 1–23 form a disordered region; sequence MSETLHLSAETRDRAGKGASRAL.

The protein belongs to the bacterial ribosomal protein bL25 family. CTC subfamily. Part of the 50S ribosomal subunit; part of the 5S rRNA/L5/L18/L25 subcomplex. Contacts the 5S rRNA. Binds to the 5S rRNA independently of L5 and L18.

Its function is as follows. This is one of the proteins that binds to the 5S RNA in the ribosome where it forms part of the central protuberance. The sequence is that of Large ribosomal subunit protein bL25 from Novosphingobium aromaticivorans (strain ATCC 700278 / DSM 12444 / CCUG 56034 / CIP 105152 / NBRC 16084 / F199).